The primary structure comprises 318 residues: Protein W (318 aa).

2 disordered regions span residues 1–23 and 38–318; these read MDQDAFILKEDSEVEREAPGGRE and SEPT…KKGA. Residues 7–20 are compositionally biased toward basic and acidic residues; that stretch reads ILKEDSEVEREAPG. The span at 50–59 shows a compositional bias: polar residues; it reads LHNTINTPQG. Residue Ser68 is modified to Phosphoserine; by host. The span at 83–101 shows a compositional bias: basic and acidic residues; the sequence is RSGEESRVSGRTSKPEAEA. Ser125 bears the Phosphoserine; by host mark. Residues 150–168 show a composition bias toward basic and acidic residues; that stretch reads GIEDENREMAAHPDKRGED. Residues 191-206 are compositionally biased toward polar residues; the sequence is ASNNGRSMEPGSSHSA. Phosphoserine; by host is present on residues Ser192, Ser249, Ser257, and Ser260.

In Sendai virus (strain Fushimi) (SeV), this protein is Protein W (P/V/C).